An 802-amino-acid polypeptide reads, in one-letter code: MRALWVLGLCCVLLTFGSARADDEVDVDGTVEEDLGKSREGSRTDDEVVQREEEAIQLDGLNASQIRELREKSEKFAFQAEVNRMMKLIINSLYKNKEIFLRELISNASDALDKIRLISLTDEQALSGNEELTVKIKCDKEKNLLHVTDTGVGMTREELVKNLGTIAKSGTSEFLNKMTEAQEDGQSTSELIGQFGVGFYSAFLVADKVIVTSKHNNDTQHIWESDSNEFSVIADPRGNTLGRGTTITLVLKEEASDYLELDTIKNLVKKYSQFINFPIYVWSSKTETVEEPAEEEEAAKEEKEEADDEAAVEEEEEEKKPKTKKVEKTVWDWELMNDIKPIWQRPSKEVEEDEYKAFYKSFSKESDDPMAYIHFTAEGEVTFKSILFVPTSAPRGLFDEYGSKKSDYIKLYVRRVFITDDFHDMMPKYLNFVKGVVDSDDLPLNVSRETLQQHKLLKVIRKKLVRKTLDMIKKIADEKYNDTFWKEFGTNIKLGVIEDHSNRTRLAKLLRFQSSHHPTDITSLDQYVERMKEKQDKIYFMAGASRKEAESSPFVERLLKKGYEVIYLTEPVDEYCIQALPEFDGKRFQNVAKEGVKFDESEKTKESREATEKEFEPLLNWMKDKALKDKIEKAVVSQRLTESPCALVASQYGWSGNMERIMKAQAYQTGKDISTNYYASQKKTFEINPRHPLIRDMLRRIKEDEDDKTVMDLAVVLFETATLRSGYLLPDTKAYGDRIERMLRLSLNIDPDAKVEEEPEEEPEDTTEDTEQDEEEEMDAGTDEEEQEQEPEKKSTAEKDEL.

The N-terminal stretch at 1-21 is a signal peptide; sequence MRALWVLGLCCVLLTFGSARA. The SRT pseudosubstrate motif motif lies at 42-44; the sequence is SRT. N62 is a glycosylation site (N-linked (GlcNAc...) asparagine). The residue at position 64 (S64) is a Phosphoserine. N-linked (GlcNAc...) asparagine glycosylation is present at N107. The ATP site is built by N107, D149, and N162. N6-(2-hydroxyisobutyryl)lysine is present on K168. S172 carries the post-translational modification Phosphoserine. Position 199 (F199) interacts with ATP. The N-linked (GlcNAc...) asparagine glycan is linked to N217. The interval 288-323 is disordered; sequence TVEEPAEEEEAAKEEKEEADDEAAVEEEEEEKKPKT. Residues 289 to 317 are compositionally biased toward acidic residues; sequence VEEPAEEEEAAKEEKEEADDEAAVEEEEE. S403 carries the phosphoserine modification. At K404 the chain carries N6-succinyllysine. N445 carries N-linked (GlcNAc...) asparagine glycosylation. S447 is subject to Phosphoserine. At K479 the chain carries N6-acetyllysine. N-linked (GlcNAc...) asparagine glycosylation is found at N481 and N502. Position 633 is an N6-succinyllysine (K633). The disordered stretch occupies residues 750–802; sequence DPDAKVEEEPEEEPEDTTEDTEQDEEEEMDAGTDEEEQEQEPEKKSTAEKDEL. The span at 757–789 shows a compositional bias: acidic residues; the sequence is EEPEEEPEDTTEDTEQDEEEEMDAGTDEEEQEQ. Phosphothreonine is present on T782. Residues 790-802 show a composition bias toward basic and acidic residues; the sequence is EPEKKSTAEKDEL. The short motif at 799–802 is the Prevents secretion from ER element; that stretch reads KDEL.

The protein belongs to the heat shock protein 90 family. As to quaternary structure, homodimer; disulfide-linked. Component of an EIF2 complex at least composed of CELF1/CUGBP1, CALR, CALR3, EIF2S1, EIF2S2, HSP90B1 and HSPA5. Part of a large chaperone multiprotein complex comprising DNAJB11, HSP90B1, HSPA5, HYOU, PDIA2, PDIA4, PDIA6, PPIB, SDF2L1, UGGT1 and very small amounts of ERP29, but not, or at very low levels, CALR nor CANX. Interacts with AIMP1; regulates its retention in the endoplasmic reticulum. Hyperglycosylated form interacts with OS9; promoting its degradation by the endoplasmic reticulum associated degradation (ERAD). Interacts with CNPY3. This interaction is disrupted in the presence of ATP. Interacts with TLR4 and TLR9, but not with TLR3. Interacts with MZB1 in a calcium-dependent manner. Interacts with METTL23. Interacts with IL1B; the interaction facilitates cargo translocation into the ERGIC. Interacts with EIF2AK3. Phosphorylated by CK2. In terms of processing, N-glycosylated cotranslationally at Asn-217 by STT3A-containing OST-A complex: this glycosylation is constitutive. In response to various stress, 5 additional facultative sites (Asn-62, Asn-107, Asn-445, Asn-481 and Asn-502) can be glycosylated post-translationally by STT3B-containing OST-B complex, leading to a hyperglycosylated form that is degraded by the ER-associated degradation (ERAD) pathway. In normal conditions, the OST-A complex together with CCDC134 prevent glycosylation at facultative sites during protein folding, thereby preventing hyperglycosylation. Mechanistically, nascent HSP90B1 is tethered during translation to a specialized CCDC134-containing translocon that forms a microenvironment for its folding, in which STT3A associates with the SRT pseudosubstrate motif, and prevents access to facultative glycosylation sites until folding is completed, rendering its facultative sites inaccessible to the OST-B complex.

Its subcellular location is the endoplasmic reticulum lumen. The protein localises to the sarcoplasmic reticulum lumen. The protein resides in the melanosome. The catalysed reaction is ATP + H2O = ADP + phosphate + H(+). In terms of biological role, ATP-dependent chaperone involved in the processing of proteins in the endoplasmic reticulum, regulating their transport. Together with MESD, acts as a modulator of the Wnt pathway by promoting the folding of LRP6, a coreceptor of the canonical Wnt pathway. When associated with CNPY3, required for proper folding of Toll-like receptors. Promotes folding and trafficking of TLR4 to the cell surface. May participate in the unfolding of cytosolic leaderless cargos (lacking the secretion signal sequence) such as the interleukin 1/IL-1 to facilitate their translocation into the ERGIC (endoplasmic reticulum-Golgi intermediate compartment) and secretion; the translocation process is mediated by the cargo receptor TMED10. This chain is Endoplasmin (HSP90B1), found in Oryctolagus cuniculus (Rabbit).